A 417-amino-acid polypeptide reads, in one-letter code: Serine hydroxymethyltransferase 2 (417 aa).

(6S)-5,6,7,8-tetrahydrofolate contacts are provided by residues leucine 121 and 125 to 127; that span reads GHL. Lysine 230 is modified (N6-(pyridoxal phosphate)lysine). 355 to 357 lines the (6S)-5,6,7,8-tetrahydrofolate pocket; it reads SPF.

It belongs to the SHMT family. As to quaternary structure, homodimer. Pyridoxal 5'-phosphate serves as cofactor.

It localises to the cytoplasm. The enzyme catalyses (6R)-5,10-methylene-5,6,7,8-tetrahydrofolate + glycine + H2O = (6S)-5,6,7,8-tetrahydrofolate + L-serine. It functions in the pathway one-carbon metabolism; tetrahydrofolate interconversion. It participates in amino-acid biosynthesis; glycine biosynthesis; glycine from L-serine: step 1/1. Its function is as follows. Catalyzes the reversible interconversion of serine and glycine with tetrahydrofolate (THF) serving as the one-carbon carrier. This reaction serves as the major source of one-carbon groups required for the biosynthesis of purines, thymidylate, methionine, and other important biomolecules. Also exhibits THF-independent aldolase activity toward beta-hydroxyamino acids, producing glycine and aldehydes, via a retro-aldol mechanism. The polypeptide is Serine hydroxymethyltransferase 2 (Colwellia psychrerythraea (strain 34H / ATCC BAA-681) (Vibrio psychroerythus)).